The following is a 214-amino-acid chain: DNA-binding protein HupB (214 aa).

Residue Lys3 is modified to N6-acetyllysine. An N6-succinyllysine modification is found at Lys3. 2 positions are modified to phosphothreonine: Thr43 and Thr45. N6-acetyllysine is present on residues Lys72, Lys86, and Lys103. Residues 100–214 (PAVKRGVGAS…KKATARRGRK (115 aa)) form a disordered region. The segment covering 102-112 (VKRGVGASAAK) has biased composition (low complexity). An N6-succinyllysine modification is found at Lys113. Residues 113–214 (KVAKKAPAKK…KKATARRGRK (102 aa)) show a composition bias toward basic residues. 2 positions are modified to N6-acetyllysine: Lys116 and Lys133. Lys142 is modified (N6-succinyllysine). Residues Lys146 and Lys167 each carry the N6-acetyllysine modification.

It belongs to the bacterial histone-like protein family. Long actinobacterial subfamily. In terms of assembly, oligomerizes. Homodimer; the crystallized protein is missing the C-terminal 105 residues. Interacts with topoisomerase 1 (topA). Interacts with Eis. Interacts with NAD-dependent protein deacylase NPD (MRA_1161). Interacts with MRA_0812 CoA transferase. Phosphorylated in vivo on Ser and Thr-residues; the protein is degraded during purification so most sites were not identified, but at least one of Thr-43 and/or Thr-45 are modified in vivo. In vitro at least PknE, PknF and PknB phosphorylate HupB; PknE is the most active and phosphorylates many sites in vitro including Thr-43 and Thr-45. Post-translationally, acetylated on 8 Lys residues in vivo (probably by Eis). In vitro acetylated by Eis on 28 residues (strains H37Rv and H37Ra), many more than those identified in vivo. Also acetylated by MRA_0812. Deacetylated in vitro by NAD-dependent protein deacylase NPD (MRA_1161). In terms of processing, succinylated in vivo and in vitro by MRA_0812 and by Eis; only 3 residues are found to be succinylated in vivo, while 27 are modifed in vitro by MRA_0812 and 32 are succinylated by Eis. NAD-dependent protein deacylase (MRA_1161) desuccinylates this protein.

It localises to the cytoplasm. It is found in the nucleoid. It carries out the reaction 4 Fe(2+) + O2 + 4 H(+) = 4 Fe(3+) + 2 H2O. Two trans-stilbene derivatives, 4,4'-[(E)-ethene-1,2 diylbis({5[(phenylcarbonyl)amino]benzene-2,1-diyl}sulfonylimino)] dibenzoic acid and its methoxy derivative 4,4'-[1,2-ethenediylbis({5-[(4-methoxybenzoyl)amino]-2,1phenylene}sulfonylimino)] dibenzoic acid, respectively SD1 and SD4, inhibit DNA binding with 50% inhibition at 20 uM for SD1 and 1.7 uM for SD4. SD1 and SD4 have minimal inhibitory concentrations of 400 and 800 uM on strain H37Ra respectively. Its function is as follows. A nucleoid-associated protein (NAP) that plays a role in local chromosome architecture. Binds DNA non-sequence specifically; in vitro phosphorylation of an N-terminal fragment decreases DNA-binding. Stimulates supercoiling relaxation by topoisomerase 1 (Top1, topA), at higher than 80 uM inhibits relaxation, has no effect on DNA gyrase; the effect is independent of DNA-binding. Increases the intervening strand passage activity of Top1 that occurs between the two catalytic trans-esterification reactions. Does not bind ssDNA, probably helps condense chromosomes. Binds dsDNA; in vitro acetylated protein binds 10-fold less well to DNA (note in vitro acetylated protein is more heavily modified than in vivo modified protein). In vitro acetylated protein compacts DNA less well than unmodified protein. In vitro succinylated DNA bind dsDNA less well than unmodified protein (note in vitro succinylated protein is more heavily modified than in vivo modified protein). Has ferroxidase activity, converts Fe(2+) into Fe(3+). Binds Fe(3+) but not Fe(2+); prevents the generation of hydroxyl radicals by the Fenton reaction and thus protects DNA from damage. May function in iron storage. In terms of biological role, required for biofilm formation; trimethylation by recombinant human SUV39H1 (a histone methyltransferase) inhibits biofilm formation. Probably influences transcription. RNase E and HupB jointly contribute to cellular adaptation to changing growth conditions and survival during antibiotic treatment and in the host. The protein is DNA-binding protein HupB of Mycobacterium tuberculosis (strain ATCC 25177 / H37Ra).